Consider the following 257-residue polypeptide: NAD-capped RNA hydrolase NudC (257 aa).

Substrate-binding residues include Lys-25 and Arg-69. Zn(2+) contacts are provided by Cys-98 and Cys-101. Substrate is bound at residue Glu-111. Residues Cys-116 and Cys-119 each coordinate Zn(2+). Tyr-124 is a binding site for substrate. Positions 125–248 (PQIAPCIIVA…TVARRLIEDT (124 aa)) constitute a Nudix hydrolase domain. 3 residues coordinate a divalent metal cation: Ala-158, Glu-174, and Glu-178. Residues 159–180 (GFVEVGETLEQAVAREVMEESG) carry the Nudix box motif. 192-199 (QPWPFPQS) serves as a coordination point for substrate. Glu-219 provides a ligand contact to a divalent metal cation. A substrate-binding site is contributed by Ala-241.

It belongs to the Nudix hydrolase family. NudC subfamily. Homodimer. The cofactor is Mg(2+). It depends on Mn(2+) as a cofactor. Zn(2+) serves as cofactor.

It carries out the reaction a 5'-end NAD(+)-phospho-ribonucleoside in mRNA + H2O = a 5'-end phospho-adenosine-phospho-ribonucleoside in mRNA + beta-nicotinamide D-ribonucleotide + 2 H(+). The catalysed reaction is NAD(+) + H2O = beta-nicotinamide D-ribonucleotide + AMP + 2 H(+). The enzyme catalyses NADH + H2O = reduced beta-nicotinamide D-ribonucleotide + AMP + 2 H(+). Its function is as follows. mRNA decapping enzyme that specifically removes the nicotinamide adenine dinucleotide (NAD) cap from a subset of mRNAs by hydrolyzing the diphosphate linkage to produce nicotinamide mononucleotide (NMN) and 5' monophosphate mRNA. The NAD-cap is present at the 5'-end of some mRNAs and stabilizes RNA against 5'-processing. Has preference for mRNAs with a 5'-end purine. Catalyzes the hydrolysis of a broad range of dinucleotide pyrophosphates. This Escherichia coli O157:H7 protein is NAD-capped RNA hydrolase NudC.